We begin with the raw amino-acid sequence, 359 residues long: 3-dehydroquinate synthase (359 aa).

NAD(+) contacts are provided by residues 71-76, 105-109, 129-130, K142, K151, and 169-172; these read DGEAYK, GVIGD, TT, and TLGT. Residues E184, H247, and H264 each contribute to the Zn(2+) site.

It belongs to the sugar phosphate cyclases superfamily. Dehydroquinate synthase family. Co(2+) is required as a cofactor. Zn(2+) serves as cofactor. Requires NAD(+) as cofactor.

The protein localises to the cytoplasm. The enzyme catalyses 7-phospho-2-dehydro-3-deoxy-D-arabino-heptonate = 3-dehydroquinate + phosphate. The protein operates within metabolic intermediate biosynthesis; chorismate biosynthesis; chorismate from D-erythrose 4-phosphate and phosphoenolpyruvate: step 2/7. Its function is as follows. Catalyzes the conversion of 3-deoxy-D-arabino-heptulosonate 7-phosphate (DAHP) to dehydroquinate (DHQ). The chain is 3-dehydroquinate synthase from Thiobacillus denitrificans (strain ATCC 25259 / T1).